A 709-amino-acid polypeptide reads, in one-letter code: DNA ligase (709 aa).

The segment at 1 to 20 is disordered; it reads MTATHRGAQADASAPAGPLP. NAD(+)-binding positions include 52 to 56, 101 to 102, and glutamate 146; these read DAEYD and SL. Catalysis depends on lysine 148, which acts as the N6-AMP-lysine intermediate. Arginine 169, glutamate 205, lysine 322, and lysine 346 together coordinate NAD(+). Zn(2+) contacts are provided by cysteine 440, cysteine 443, cysteine 458, and cysteine 464. The BRCT domain occupies 623–709; it reads KAPAPLSGKT…AEAGAAPAQE (87 aa).

This sequence belongs to the NAD-dependent DNA ligase family. LigA subfamily. Mg(2+) is required as a cofactor. It depends on Mn(2+) as a cofactor.

It catalyses the reaction NAD(+) + (deoxyribonucleotide)n-3'-hydroxyl + 5'-phospho-(deoxyribonucleotide)m = (deoxyribonucleotide)n+m + AMP + beta-nicotinamide D-nucleotide.. In terms of biological role, DNA ligase that catalyzes the formation of phosphodiester linkages between 5'-phosphoryl and 3'-hydroxyl groups in double-stranded DNA using NAD as a coenzyme and as the energy source for the reaction. It is essential for DNA replication and repair of damaged DNA. The chain is DNA ligase from Cupriavidus necator (strain ATCC 17699 / DSM 428 / KCTC 22496 / NCIMB 10442 / H16 / Stanier 337) (Ralstonia eutropha).